We begin with the raw amino-acid sequence, 211 residues long: Large ribosomal subunit protein bL25 (211 aa).

Disordered stretches follow at residues 1 to 23 and 191 to 211; these read MAGE…AARQ and LRSA…AEEV. Over residues 196 to 211 the composition is skewed to acidic residues; it reads NEADEEETEEATAEEV.

It belongs to the bacterial ribosomal protein bL25 family. CTC subfamily. As to quaternary structure, part of the 50S ribosomal subunit; part of the 5S rRNA/L5/L18/L25 subcomplex. Contacts the 5S rRNA. Binds to the 5S rRNA independently of L5 and L18.

Functionally, this is one of the proteins that binds to the 5S RNA in the ribosome where it forms part of the central protuberance. The protein is Large ribosomal subunit protein bL25 of Dinoroseobacter shibae (strain DSM 16493 / NCIMB 14021 / DFL 12).